The primary structure comprises 706 residues: Cyclic nucleotide-gated channel alpha-3 (706 aa).

At Met1–His189 the chain is on the cytoplasmic side. Residues Arg113–Ser177 are disordered. Over residues Ser147–Ser177 the composition is skewed to basic and acidic residues. A helical membrane pass occupies residues Trp190–Phe211. The Extracellular segment spans residues Asp212–Glu217. Residues His218–Leu238 traverse the membrane as a helical segment. The Cytoplasmic segment spans residues Val239–Thr265. A helical membrane pass occupies residues Leu266 to Leu285. The Extracellular portion of the chain corresponds to Gly286–Tyr289. The chain crosses the membrane as a helical span at residues Pro290–Phe307. Residues Asp308–Pro317 lie on the Cytoplasmic side of the membrane. The tract at residues Pro317–Met425 is ion conduction pathway. The chain crosses the membrane as a helical span at residues Asn318 to Tyr340. The Extracellular segment spans residues Phe341 to Arg366. Asn358 is a glycosylation site (N-linked (GalNAc...) asparagine). Transmembrane regions (helical) follow at residues Leu367–Tyr397 and Leu398–Ile422. The tract at residues Thr384–Glu387 is selectivity filter. Residues Ser423–Pro706 lie on the Cytoplasmic side of the membrane. Residues Ala427–Asp504 form a C-linker region. The segment at Ala507–Lys627 is cyclic nucleotide-binding domain. Residues Gly567, Glu568, Ser570, Arg583, Thr584, and Asp628 each contribute to the 3',5'-cyclic GMP site. Positions Ile645–Val688 form a coiled coil. The interval Glu685 to Pro706 is disordered.

The protein belongs to the cyclic nucleotide-gated cation channel (TC 1.A.1.5) family. CNGA3 subfamily. Forms heterotetrameric channels composed of CNGA3 and CNGB3 subunits with 3:1 stoichiometry. In terms of tissue distribution, testis, kidney, retinal cone (at protein level) and heart.

The protein resides in the cell membrane. It carries out the reaction Ca(2+)(in) = Ca(2+)(out). The catalysed reaction is Na(+)(in) = Na(+)(out). The enzyme catalyses K(+)(in) = K(+)(out). It catalyses the reaction NH4(+)(in) = NH4(+)(out). It carries out the reaction Rb(+)(in) = Rb(+)(out). The catalysed reaction is Li(+)(in) = Li(+)(out). The enzyme catalyses Cs(+)(in) = Cs(+)(out). Its activity is regulated as follows. Ca(2+) influx is inhibited by extracellular Mg(2+) ions. Its function is as follows. Pore-forming subunit of the cone cyclic nucleotide-gated channel. Mediates cone photoresponses at bright light converting transient changes in intracellular cGMP levels into electrical signals. In the dark, cGMP levels are high and keep the channel open enabling a steady inward current carried by Na(+) and Ca(2+) ions that leads to membrane depolarization and neurotransmitter release from synaptic terminals. Upon photon absorption cGMP levels decline leading to channel closure and membrane hyperpolarization that ultimately slows neurotransmitter release and signals the presence of light, the end point of the phototransduction cascade. Pore-forming subunit of the gustatory cyclic nucleotide-gated channel. In the taste buds, may sense oral extracellular pH and conduct ion currents that modulate the excitability of taste cells. Conducts cGMP- and cAMP-gated ion currents, with permeability for monovalent and divalent cations. This Bos taurus (Bovine) protein is Cyclic nucleotide-gated channel alpha-3.